A 256-amino-acid chain; its full sequence is uncharacterized protein (256 aa).

To B.subtilis LplA.

This is an uncharacterized protein from Niallia circulans (Bacillus circulans).